The following is a 200-amino-acid chain: Ankyrin repeat-containing protein YAR1 (200 aa).

ANK repeat units lie at residues 49 to 78 and 92 to 121; these read SDSTALHMAAANGHIETVRYILETVSRANS and TGNTALHWASLNGKLDVVKLLCDEYEADPF. S78 is modified (phosphoserine). Residues 152-173 form a disordered region; that stretch reads VEPEDDEEDTQTEGKNSVQITK. Positions 153–162 are enriched in acidic residues; that stretch reads EPEDDEEDTQ. Residues 164-173 show a composition bias toward polar residues; the sequence is EGKNSVQITK.

Functionally, required for normal rate of cell proliferation. This chain is Ankyrin repeat-containing protein YAR1 (YAR1), found in Saccharomyces cerevisiae (strain ATCC 204508 / S288c) (Baker's yeast).